Consider the following 145-residue polypeptide: Large ribosomal subunit protein bL17 (145 aa).

This sequence belongs to the bacterial ribosomal protein bL17 family. In terms of assembly, part of the 50S ribosomal subunit. Contacts protein L32.

The polypeptide is Large ribosomal subunit protein bL17 (Francisella tularensis subsp. tularensis (strain FSC 198)).